The chain runs to 224 residues: Transposase for insertion sequence-like element IS431mec (224 aa).

The H-T-H motif DNA-binding region spans 33-52 (EILRERGVNVHHSTVYRWVQ). Residues 73 to 222 (WRIDETYIKI…SPCHEISIML (150 aa)) enclose the Integrase catalytic domain.

Its function is as follows. Involved in the transposition of the insertion sequence. The chain is Transposase for insertion sequence-like element IS431mec (tnp) from Staphylococcus aureus (strain NCTC 8325 / PS 47).